Consider the following 583-residue polypeptide: Cationic amino acid transporter 6, chloroplastic (583 aa).

The transit peptide at 1 to 50 (MEVQSSSNNGGHSSFSSLRVYLNSLSATPSRLSRRAISVSTSSDEMSRVR) directs the protein to the chloroplast. 14 helical membrane passes run 63 to 83 (WYDL…FVTT), 91 to 111 (AGPS…LSAF), 132 to 152 (ITFG…DYVM), 186 to 206 (GFNE…VIIC), 216 to 236 (NMIM…MGFI), 255 to 275 (FFPF…LSYI), 294 to 314 (IPVG…LMAV), 347 to 367 (VVGI…MLGQ), 397 to 417 (ASTF…LNVL), 418 to 438 (LNLV…ALIF), 450 to 470 (WPTL…TLIW), 481 to 501 (FMLG…QCVV), 509 to 529 (LWGV…NIFL), and 541 to 561 (FGFF…HASS).

It belongs to the amino acid-polyamine-organocation (APC) superfamily. Cationic amino acid transporter (CAT) (TC 2.A.3.3) family. As to expression, expressed in roots, stems, flowers, and leaves.

It localises to the plastid. The protein localises to the chloroplast membrane. Functionally, permease involved in the transport of the cationic neutral or acidic amino acids. This is Cationic amino acid transporter 6, chloroplastic (CAT6) from Arabidopsis thaliana (Mouse-ear cress).